A 60-amino-acid chain; its full sequence is MATKTVKVTQTKSGIGRLPKHRATLTGLGLRRIGHTVELEDTPSVRGMINKVYYMVKVED.

The protein belongs to the universal ribosomal protein uL30 family. Part of the 50S ribosomal subunit.

The chain is Large ribosomal subunit protein uL30 from Shewanella baltica (strain OS223).